The primary structure comprises 80 residues: Lantibiotic Flvalpha.b (80 aa).

Residues 1–38 (MNKNPIYRSEEEAKNIACGNVAAELDENSQALDAINGA) constitute a propeptide, cleaved by FlvT. 2,3-didehydrobutyrine; by FlvM1 occurs at positions 43 and 47. Residues 52 to 55 (TVGC) constitute a cross-link (beta-methyllanthionine (Thr-Cys); by FlvM1). Positions 58-68 (SYGLGNGGYCC) form a cross-link, lanthionine (Ser-Cys); by FlvM1. 2 consecutive cross-links (beta-methyllanthionine (Thr-Cys); by FlvM1) follow at residues 69–74 (TYTVEC) and 71–78 (TVECSKTC).

The lanthionine formed by Ser-58 and Cys-68 forms a putative lipid II binding motif. Post-translationally, maturation of FlvA1 peptides involves the enzymatic conversion of Thr, and Ser into dehydrated AA and the formation of thioether bonds with cysteines. Modifications are processed by the flavecin synthetase FlvM1. This is followed by membrane translocation and cleavage of the modified precursor. In terms of processing, contains DL-lanthionine and DL-beta-methyllanthionine, when coepressed in E.coli with the flavecin synthetase FlvM1.

The protein resides in the secreted. Functionally, lanthionine-containing peptide antibiotic (lantibiotic) only active on Gram-positive bacteria in synergy with Flvbeta peptides, which are encoded by the same operon than Flvalpha.a. Shows antibacterial activity in synergy with Flvbeta.b, Flvbeta.c, Flvbeta.e and Flvbeta.g. Does not show antibacterial activity when tested with Flvbeta.a, Flvbeta.d, Flvbeta.f and Flvbeta.h. The bactericidal activity of lantibiotics is based on depolarization of energized bacterial cytoplasmic membranes, initiated by the formation of aqueous transmembrane pores. This chain is Lantibiotic Flvalpha.b, found in Ruminococcus flavefaciens.